We begin with the raw amino-acid sequence, 417 residues long: Serine hydroxymethyltransferase (417 aa).

Residues L121 and 125-127 each bind (6S)-5,6,7,8-tetrahydrofolate; that span reads GHL. K229 bears the N6-(pyridoxal phosphate)lysine mark. 355–357 contributes to the (6S)-5,6,7,8-tetrahydrofolate binding site; the sequence is SPF.

This sequence belongs to the SHMT family. In terms of assembly, homodimer. It depends on pyridoxal 5'-phosphate as a cofactor.

It is found in the cytoplasm. It carries out the reaction (6R)-5,10-methylene-5,6,7,8-tetrahydrofolate + glycine + H2O = (6S)-5,6,7,8-tetrahydrofolate + L-serine. Its pathway is one-carbon metabolism; tetrahydrofolate interconversion. The protein operates within amino-acid biosynthesis; glycine biosynthesis; glycine from L-serine: step 1/1. Catalyzes the reversible interconversion of serine and glycine with tetrahydrofolate (THF) serving as the one-carbon carrier. This reaction serves as the major source of one-carbon groups required for the biosynthesis of purines, thymidylate, methionine, and other important biomolecules. Also exhibits THF-independent aldolase activity toward beta-hydroxyamino acids, producing glycine and aldehydes, via a retro-aldol mechanism. In Tolumonas auensis (strain DSM 9187 / NBRC 110442 / TA 4), this protein is Serine hydroxymethyltransferase.